The chain runs to 353 residues: UPF0283 membrane protein YcjF (353 aa).

Transmembrane regions (helical) follow at residues Met-70–Thr-90, Val-100–Val-120, and Glu-213–Trp-233.

The protein belongs to the UPF0283 family.

It is found in the cell inner membrane. This chain is UPF0283 membrane protein YcjF, found in Escherichia coli O127:H6 (strain E2348/69 / EPEC).